A 754-amino-acid chain; its full sequence is 1,4-alpha-glucan branching enzyme GlgB (754 aa).

The active-site Nucleophile is the Asp431. Catalysis depends on Glu484, which acts as the Proton donor.

This sequence belongs to the glycosyl hydrolase 13 family. GlgB subfamily. As to quaternary structure, monomer.

The catalysed reaction is Transfers a segment of a (1-&gt;4)-alpha-D-glucan chain to a primary hydroxy group in a similar glucan chain.. Its pathway is glycan biosynthesis; glycogen biosynthesis. Catalyzes the formation of the alpha-1,6-glucosidic linkages in glycogen by scission of a 1,4-alpha-linked oligosaccharide from growing alpha-1,4-glucan chains and the subsequent attachment of the oligosaccharide to the alpha-1,6 position. In Prochlorococcus marinus (strain MIT 9515), this protein is 1,4-alpha-glucan branching enzyme GlgB.